Consider the following 234-residue polypeptide: Protein UL20 homolog (234 aa).

Transmembrane regions (helical) follow at residues V82 to F102, F112 to Y132, I153 to F173, and T191 to I211.

It belongs to the alphaherpesvirinae UL20 family. As to quaternary structure, interacts with gK (via N-terminus); this interaction plays a role in the coordinate transport of UL20 and gK to the trans-Golgi network (TGN), and is required for their cell surface expression. Interacts with gB.

The protein resides in the virion. Its subcellular location is the host cell membrane. It is found in the host endosome membrane. The protein localises to the host Golgi apparatus membrane. It localises to the host nucleus membrane. Its function is as follows. Plays an essential role in egress of virus particles from the nucleus, cytoplasmic envelopment and virus-induced cell fusion. Forms a functional protein complex with gK and this interaction is absolutely essential for their coordinate intracellular transport, gK glycosylation, expression on host cell surface, and function. Together, they modulate gB-mediated virus-induced cell fusion and virion egress and therefore actively participate in these processes. The chain is Protein UL20 homolog (MDV032) from Gallid herpesvirus 2 (strain Chicken/Md5/ATCC VR-987) (GaHV-2).